A 360-amino-acid polypeptide reads, in one-letter code: Phospho-N-acetylmuramoyl-pentapeptide-transferase (360 aa).

Helical transmembrane passes span 21-41 (YLSFRAILSVLTALGLSLWMG), 73-93 (TMGGVMILAAISITILLWANL), 94-114 (SNPYVWAVLAVLMGYGAVGFV), 132-152 (WKYFWQSAIALIVAFALYAYG), 168-188 (VMPQLGLMYIVLTYFVIVGTS), 199-219 (GLAIMPTVLVAAGFAVIAWAT), 236-256 (ASELVVVCTAIVGAGLGFLWF), 263-283 (VFMGDVGSLALGGALGTIAVL), 288-308 (LVLVIMGGVFVMETLSVILQV), and 338-358 (VIVRFWIISMVLVLIGLATLK).

Belongs to the glycosyltransferase 4 family. MraY subfamily. Mg(2+) serves as cofactor.

It is found in the cell inner membrane. The catalysed reaction is UDP-N-acetyl-alpha-D-muramoyl-L-alanyl-gamma-D-glutamyl-meso-2,6-diaminopimeloyl-D-alanyl-D-alanine + di-trans,octa-cis-undecaprenyl phosphate = di-trans,octa-cis-undecaprenyl diphospho-N-acetyl-alpha-D-muramoyl-L-alanyl-D-glutamyl-meso-2,6-diaminopimeloyl-D-alanyl-D-alanine + UMP. It participates in cell wall biogenesis; peptidoglycan biosynthesis. Catalyzes the initial step of the lipid cycle reactions in the biosynthesis of the cell wall peptidoglycan: transfers peptidoglycan precursor phospho-MurNAc-pentapeptide from UDP-MurNAc-pentapeptide onto the lipid carrier undecaprenyl phosphate, yielding undecaprenyl-pyrophosphoryl-MurNAc-pentapeptide, known as lipid I. This chain is Phospho-N-acetylmuramoyl-pentapeptide-transferase, found in Vibrio vulnificus (strain CMCP6).